Here is a 122-residue protein sequence, read N- to C-terminus: Large ribosomal subunit protein uL14 (122 aa).

Belongs to the universal ribosomal protein uL14 family. In terms of assembly, part of the 50S ribosomal subunit. Forms a cluster with proteins L3 and L19. In the 70S ribosome, L14 and L19 interact and together make contacts with the 16S rRNA in bridges B5 and B8.

In terms of biological role, binds to 23S rRNA. Forms part of two intersubunit bridges in the 70S ribosome. This chain is Large ribosomal subunit protein uL14, found in Nitrobacter winogradskyi (strain ATCC 25391 / DSM 10237 / CIP 104748 / NCIMB 11846 / Nb-255).